The chain runs to 1226 residues: MREGSFPRRIGLLLGLLGLLAGVATFNIDTKNVVVHHMAGNYFGYSLDFYHEQKGMPVLVVGAPEAESNNPNLAGIRRPGAVYACSVNRATCREVHVDKMKGNLKKLNGSHLVPIEEKSHQFFGATVRSNDKHDKIVVCAPKYTYFYSKFEVIEPVGTCFYAENGFDNAEEFSSCKQEPARHGRHRLGYGQCGFSAAVPGKKNQNRVFIGAPGVWYWQGAMFSQNIKNQTDRPNTEYGSKEYDHDMMGYSTATGDFDGDGIDDIVAGVPRGNDLHGKLVLYTSKLKMMINLTDEVSTQHGQYCGGSVAVADVNKDGRDDIIMGCPFYTDYGSVKDAKTQERKPQYDVGKVIVMLQTAPGVFGKQIAVVGDDQWGRFGHAVAAAGDLNLDGYNDVIVGAPYAGKNKQGAVYVIHGSKDGVRELPTQKIEGANIGHGNIKSFGFSLTGNEDVDGNGMPDIAVGAWKSGNAAVLLTKPVVTVTGQTEPESALISVEDKNCDVDGKLGKQACKHINTCFKYEGKGDTPNDLEFDLRFNLDDHSPEPRAYFLQKDVKSDRSIKVAQGSKTRDHPSSIEQRVRLEKGRQKCFRHRFFASSTMKDKLSPIHWSVNYTYVESKTGKLRGDKLEPAIDTTVPLSFQNKINIANNCGKDDLCVPDLKVTAVADREKFLLGTQDNTMLINVTVQNGGEDSYETKLYFDVPQGFEYGGIESVGGDGSKSAPACSPTSDEPDSDGKWTFACDLGNPLPANKVVSSVVRVTASSDKPPLAPISINAHVNSSNDEEAHTVADNKVTFTIPVDFKNQLSLNGRSNPEQVDFSMTNKTRVDAFDDNEIGPVVSHLYQISNRGPSEVDSATLDIFWPSFSTEGGHLLYIITEPVVNPPNKGRCRVKQLQNVNPLNLRITNEHVPTEPPVAKTPNEYSREEDDESYEDETTTQSQSTRHQSTQHQTHHQSGPVHVYEKDEEKIRQNTGNWQYVEDKKKKGDYEYIPDDQEYDGDDFEEEDDEDFDRAGSKRVKRNPTPKKKKKGGEHRGEPRSDKARFSDLREAVKLSKEAGGVVDYKGPLSRASVDCNSLRCTHIECDIYDLKEDEFVLVEIFSRLYTNTLVDEKNPGGDISSLALARVTSTKYNLPHKPTLITAVSTNMNAIASEEGRDLPWWLYLLAILIGLAILILLILLLWRCGFFKRNRPPTEHAELRADRQPNAQYADSQSRYTSQDQYNQGRHGQML.

The signal sequence occupies residues 1-25 (MREGSFPRRIGLLLGLLGLLAGVAT). Residues 26–1154 (FNIDTKNVVV…IASEEGRDLP (1129 aa)) lie on the Extracellular side of the membrane. 7 FG-GAP repeats span residues 27–94 (NIDT…TCRE), 108–171 (NGSH…NAEE), 178–233 (EPAR…TDRP), 234–290 (NTEY…MMIN), 291–345 (LTDE…KPQY), 362–421 (GKQI…GVRE), and 425–488 (QKIE…PESA). Residues N108, N228, and N290 are each glycosylated (N-linked (GlcNAc...) asparagine). The N-linked (GlcNAc...) asparagine glycan is linked to N608. A Cell attachment site motif is present at residues 620-622 (RGD). An N-linked (GlcNAc...) asparagine glycan is attached at N679. The interval 709–733 (SVGGDGSKSAPACSPTSDEPDSDGK) is disordered. N-linked (GlcNAc...) asparagine glycans are attached at residues N775 and N819. 2 disordered regions span residues 898-958 (LRIT…HVYE) and 982-1040 (DYEY…ARFS). A compositionally biased stretch (acidic residues) spans 920–931 (REEDDESYEDET). Residues 932–951 (TTQSQSTRHQSTQHQTHHQS) show a composition bias toward low complexity. The span at 985-1005 (YIPDDQEYDGDDFEEEDDEDF) shows a compositional bias: acidic residues. Residues 1010–1026 (SKRVKRNPTPKKKKKGG) show a composition bias toward basic residues. Over residues 1027 to 1040 (EHRGEPRSDKARFS) the composition is skewed to basic and acidic residues. The chain crosses the membrane as a helical span at residues 1155 to 1177 (WWLYLLAILIGLAILILLILLLW). At 1178 to 1226 (RCGFFKRNRPPTEHAELRADRQPNAQYADSQSRYTSQDQYNQGRHGQML) the chain is on the cytoplasmic side. Positions 1191–1226 (HAELRADRQPNAQYADSQSRYTSQDQYNQGRHGQML) are disordered. The span at 1200-1226 (PNAQYADSQSRYTSQDQYNQGRHGQML) shows a compositional bias: polar residues.

This sequence belongs to the integrin alpha chain family. As to quaternary structure, heterodimer of an alpha and a beta subunit. Interacts with beta subunit pat-3. Interacts with dep-1. Component of an integrin containing attachment complex, composed of at least pat-2, pat-3, pat-4, pat-6, unc-52, unc-97 and unc-112. In terms of tissue distribution, expressed in body-wall muscle cells, distal tip cells, and vulval tissue.

The protein resides in the membrane. Its function is as follows. Required for muscle development probably through the regulation of the actin-myosin cytoskeleton. Component of an integrin containing attachment complex, which is required for muscle maintenance. During the formation of neuromuscular junctions at the larval stage, negatively regulates membrane protrusion from body wall muscles, probably through lamins such as epi-1, lam-2 and unc-52. Required for distal tip cell migration and dorsal pathfinding. Required for egg-laying. May play a role in cell motility and cell-cell interactions. Plays a role in vulval development. Probably within the alpha pat-2/beta pat-3 integrin receptor complex, plays a role in the negative regulation of let-23 signaling and vulval induction. This is probably partly by restricting the mobility of the let-23 receptor on the plasma membrane of vulval cells which thereby attenuates let-23 signaling. The chain is Integrin alpha pat-2 from Caenorhabditis elegans.